Consider the following 215-residue polypeptide: Ribonuclease T (215 aa).

The Exonuclease domain maps to 20-194; sequence VVIDVETAGF…YDTLQTAKLF (175 aa). Residues D23, E25, H181, and D186 each coordinate Mg(2+). H181 acts as the Proton donor/acceptor in catalysis.

This sequence belongs to the RNase T family. In terms of assembly, homodimer. The cofactor is Mg(2+).

Trims short 3' overhangs of a variety of RNA species, leaving a one or two nucleotide 3' overhang. Responsible for the end-turnover of tRNA: specifically removes the terminal AMP residue from uncharged tRNA (tRNA-C-C-A). Also appears to be involved in tRNA biosynthesis. This Yersinia pseudotuberculosis serotype O:1b (strain IP 31758) protein is Ribonuclease T.